Here is a 658-residue protein sequence, read N- to C-terminus: Glycogen debranching enzyme (658 aa).

Asp336 functions as the Nucleophile in the catalytic mechanism. Glu371 serves as the catalytic Proton donor.

Belongs to the glycosyl hydrolase 13 family.

It catalyses the reaction Hydrolysis of (1-&gt;6)-alpha-D-glucosidic linkages to branches with degrees of polymerization of three or four glucose residues in limit dextrin.. It participates in glycan degradation; glycogen degradation. In terms of biological role, removes maltotriose and maltotetraose chains that are attached by 1,6-alpha-linkage to the limit dextrin main chain, generating a debranched limit dextrin. This is Glycogen debranching enzyme from Klebsiella pneumoniae subsp. pneumoniae (strain ATCC 700721 / MGH 78578).